The chain runs to 255 residues: uncharacterized protein (255 aa).

The J domain occupies 4–72 (DPYSVLGVEK…KRRKHYDKTG (69 aa)). 2 stretches are compositionally biased toward basic residues: residues 167–178 (FAPNEKKRKRRA) and 243–255 (TKPK…RSKE). 2 disordered regions span residues 167–215 (FAPN…EEAL) and 230–255 (LISN…RSKE).

This sequence belongs to the DnaJ family.

The protein resides in the nucleus. The protein localises to the nucleolus. This is an uncharacterized protein from Schizosaccharomyces pombe (strain 972 / ATCC 24843) (Fission yeast).